A 308-amino-acid polypeptide reads, in one-letter code: Beta-carotene hydroxylase 2, chloroplastic (308 aa).

The N-terminal 59 residues, Met1–Cys59, are a transit peptide targeting the chloroplast. A run of 2 helical transmembrane segments spans residues Tyr105–Tyr125 and Phe139–Trp159. A Fatty acid hydroxylase domain is found at Ala152–Phe279. The short motif at His164–His169 is the Histidine box-1 element. A Histidine box-2 motif is present at residues His176–His180. A run of 2 helical transmembrane segments spans residues Asp191–His211 and Ile215–Phe235. A Histidine box-3 motif is present at residues His237–His242. Residues His263–His267 carry the Histidine box-4 motif.

This sequence belongs to the sterol desaturase family.

The protein resides in the plastid. The protein localises to the chloroplast membrane. The enzyme catalyses all-trans-beta-carotene + 4 reduced [2Fe-2S]-[ferredoxin] + 2 O2 + 4 H(+) = all-trans-zeaxanthin + 4 oxidized [2Fe-2S]-[ferredoxin] + 2 H2O. The catalysed reaction is all-trans-beta-carotene + 2 reduced [2Fe-2S]-[ferredoxin] + O2 + 2 H(+) = beta-cryptoxanthin + 2 oxidized [2Fe-2S]-[ferredoxin] + H2O. It catalyses the reaction beta-cryptoxanthin + 2 reduced [2Fe-2S]-[ferredoxin] + O2 + 2 H(+) = all-trans-zeaxanthin + 2 oxidized [2Fe-2S]-[ferredoxin] + H2O. Inhibited by o-phenanthroline and 8-hydroxyquinoline. In terms of biological role, nonheme diiron monooxygenase involved in the biosynthesis of xanthophylls. Specific for beta-ring hydroxylations of beta-carotene. Produces beta-cryptoxanthin and zeaxanthin. Uses ferredoxin as an electron donor. This Capsicum annuum (Capsicum pepper) protein is Beta-carotene hydroxylase 2, chloroplastic.